A 474-amino-acid chain; its full sequence is Vacuolar basic amino acid transporter 2 (474 aa).

At 1–33 (MSISNWITTAYLITSTSFQPLYGSFSDALGRRN) the chain is on the cytoplasmic side. The chain crosses the membrane as a helical span at residues 34-54 (CLFFANGAFTIGCLACGFSKN). Residues 55–62 (IYMLSFMR) are Vacuolar-facing. Residues 63 to 85 (ALTGIGGGGLITLSTIVNSDVIP) form a helical membrane-spanning segment. At 86 to 97 (SSKRGIFQAFQN) the chain is on the cytoplasmic side. Residues 98–118 (LLLGFGAICGASFGGTIASSI) form a helical membrane-spanning segment. At 119-121 (GWR) the chain is on the vacuolar side. Residues 122–142 (WCFLIQVPISVISSILMNYYV) form a helical membrane-spanning segment. The Cytoplasmic portion of the chain corresponds to 143 to 167 (PNQKEYNRQNSSIFQNPGKILRDID). Residues 168–188 (VMGSILIITGLTLQLLYLSLG) form a helical membrane-spanning segment. Topologically, residues 189 to 196 (CSTSKLSW) are vacuolar. A helical membrane pass occupies residues 197-217 (TSPSVLLLLVGSVIILLLFIL). Residues 218–238 (HERKTSARAIIPMELVNSSYS) lie on the Cytoplasmic side of the membrane. A helical transmembrane segment spans residues 239 to 259 (VVVLSISILVGFASYAYLFTL). The Vacuolar segment spans residues 260-273 (PLFFQIVLGDSTAK). The helical transmembrane segment at 274-294 (AGLRLTIPSLFTPVGSLITGF) threads the bilayer. Over 295–303 (SMSKYNCLR) the chain is Cytoplasmic. Residues 304-324 (LLLYIGISLMFLGNFLFLFIE) traverse the membrane as a helical segment. Residues 325–331 (KTSPNWL) lie on the Vacuolar side of the membrane. A helical membrane pass occupies residues 332–352 (IGLFLIPANLGQGITFPTTLF). Residues 353–375 (TFIFMFSKSDQATATSTLYLFRS) lie on the Cytoplasmic side of the membrane. Residues 376 to 396 (IGSVWGVAISAGVIQLSFAGL) traverse the membrane as a helical segment. The Vacuolar portion of the chain corresponds to 397–447 (LRSNLKGLLDENKIKKLIVQLSANSSYIGSLHGEVKNTVIKSFDEATKRAH). N-linked (GlcNAc...) asparagine glycosylation occurs at N420. Residues 448–468 (LMSTLLSSLALILCILKDNLA) traverse the membrane as a helical segment. At 469 to 474 (KPKTRR) the chain is on the cytoplasmic side.

It belongs to the major facilitator superfamily.

Its subcellular location is the vacuole membrane. In terms of biological role, transporter required for vacuolar uptake of histidine, arginine and lysine and to a lesser extent tyrosine. This is Vacuolar basic amino acid transporter 2 (VBA2) from Saccharomyces cerevisiae (strain ATCC 204508 / S288c) (Baker's yeast).